Consider the following 1330-residue polypeptide: Sister chromatid cohesion protein PDS5 homolog A (1330 aa).

The HEAT repeat unit spans residues 387–423; it reads SLVNDQLLGFVRERTLDKRWRVRKEAMMGLAQLYKKY. The interval 1138-1330 is disordered; sequence VNKPLSATGR…AAQRQIDLQR (193 aa). Positions 1160–1171 are enriched in low complexity; that stretch reads SNISVNSELSSS. Positions 1216 to 1225 are enriched in polar residues; sequence SDQATQGNST.

It belongs to the PDS5 family. In terms of assembly, interacts with the cohesin complex. Binds chromatin in a cohesin-dependent manner.

It is found in the nucleus. In terms of biological role, may regulate sister chromatid cohesion during mitosis and couple it to DNA replication. In Gallus gallus (Chicken), this protein is Sister chromatid cohesion protein PDS5 homolog A.